A 150-amino-acid chain; its full sequence is Aspartate carbamoyltransferase regulatory chain (150 aa).

Zn(2+) contacts are provided by cysteine 105, cysteine 110, cysteine 133, and cysteine 136.

It belongs to the PyrI family. As to quaternary structure, contains catalytic and regulatory chains. Zn(2+) serves as cofactor.

Involved in allosteric regulation of aspartate carbamoyltransferase. In Thermococcus sibiricus (strain DSM 12597 / MM 739), this protein is Aspartate carbamoyltransferase regulatory chain.